The primary structure comprises 139 residues: D-ribose pyranase (139 aa).

His20 (proton donor) is an active-site residue. Residues Asp28, His106, and 128–130 contribute to the substrate site; that span reads YAN.

It belongs to the RbsD / FucU family. RbsD subfamily. In terms of assembly, homodecamer.

Its subcellular location is the cytoplasm. The catalysed reaction is beta-D-ribopyranose = beta-D-ribofuranose. The protein operates within carbohydrate metabolism; D-ribose degradation; D-ribose 5-phosphate from beta-D-ribopyranose: step 1/2. Catalyzes the interconversion of beta-pyran and beta-furan forms of D-ribose. This chain is D-ribose pyranase, found in Aeromonas salmonicida (strain A449).